The following is a 119-amino-acid chain: Holo-[acyl-carrier-protein] synthase (119 aa).

Positions 5 and 51 each coordinate Mg(2+).

The protein belongs to the P-Pant transferase superfamily. AcpS family. It depends on Mg(2+) as a cofactor.

Its subcellular location is the cytoplasm. The catalysed reaction is apo-[ACP] + CoA = holo-[ACP] + adenosine 3',5'-bisphosphate + H(+). Functionally, transfers the 4'-phosphopantetheine moiety from coenzyme A to a Ser of acyl-carrier-protein. The protein is Holo-[acyl-carrier-protein] synthase of Helicobacter pylori (strain HPAG1).